The following is a 139-amino-acid chain: MPTINQLVSQGRKKKVWKTSSPALSLVYNSLNKKQTEIPAPFKRGVCTRVATMTPKKPNSALRKYARVKLSNGFEVTAYIPGEGHNIQEHSVVLIRGGRVKDLPGVRYTIVRGTQDAAGVANRNQSRSRYGTKKPKPKS.

Residues 118–139 form a disordered region; that stretch reads AGVANRNQSRSRYGTKKPKPKS. The segment covering 130 to 139 has biased composition (basic residues); the sequence is YGTKKPKPKS.

It belongs to the universal ribosomal protein uS12 family. As to quaternary structure, part of the 30S ribosomal subunit. Contacts proteins S8 and S17. May interact with IF1 in the 30S initiation complex.

In terms of biological role, with S4 and S5 plays an important role in translational accuracy. Its function is as follows. Interacts with and stabilizes bases of the 16S rRNA that are involved in tRNA selection in the A site and with the mRNA backbone. Located at the interface of the 30S and 50S subunits, it traverses the body of the 30S subunit contacting proteins on the other side and probably holding the rRNA structure together. The combined cluster of proteins S8, S12 and S17 appears to hold together the shoulder and platform of the 30S subunit. This Mycoplasma mobile (strain ATCC 43663 / 163K / NCTC 11711) (Mesomycoplasma mobile) protein is Small ribosomal subunit protein uS12.